The sequence spans 296 residues: MSDYLVKSIDKTKNLRLLTITAKDVVGEAQKRHDLWSASAAVLGRTLVGSLLLAGAELTDKEELTVRLLGNGPVGPTIVTAMSDLKVKGYVKNPHIALSPKKNGHIDVKKAVGQGMLEVTKDLGLKEPYTGQVPIVSGEIAEDFAYYLTKSEQIPSAVGLSVFVNPNNSIGEAGGFMLQALPGASDALITETIKRIKALPALSTEFLDGMTPEDLARKILGTDCKILEKDDVAFSCDCSKEKYAGILETLKSSQLKAMINEDHGAELTCNFCGNKYHYTENELKDILAKKKEEKDY.

Cystine bridges form between Cys-236–Cys-238 and Cys-269–Cys-272.

This sequence belongs to the HSP33 family. Post-translationally, under oxidizing conditions two disulfide bonds are formed involving the reactive cysteines. Under reducing conditions zinc is bound to the reactive cysteines and the protein is inactive.

Its subcellular location is the cytoplasm. Redox regulated molecular chaperone. Protects both thermally unfolding and oxidatively damaged proteins from irreversible aggregation. Plays an important role in the bacterial defense system toward oxidative stress. This is 33 kDa chaperonin from Lactobacillus helveticus (strain DPC 4571).